We begin with the raw amino-acid sequence, 90 residues long: Small ribosomal subunit protein bS20 (90 aa).

Positions 1-15 are enriched in basic residues; sequence MANHKSAQKRIRQTK. Positions 1-22 are disordered; sequence MANHKSAQKRIRQTKTRTERNR.

Belongs to the bacterial ribosomal protein bS20 family.

Its function is as follows. Binds directly to 16S ribosomal RNA. The sequence is that of Small ribosomal subunit protein bS20 from Helicobacter hepaticus (strain ATCC 51449 / 3B1).